The chain runs to 637 residues: Choline O-acetyltransferase (637 aa).

Residues 1–13 (MPVSKREQSKDTG) are compositionally biased toward basic and acidic residues. The disordered stretch occupies residues 1–20 (MPVSKREQSKDTGDPCALPK). Histidine 329 functions as the Proton acceptor in the catalytic mechanism. CoA-binding positions include 407-419 (GKEF…MSPD), serine 445, and glutamine 545.

This sequence belongs to the carnitine/choline acetyltransferase family.

It carries out the reaction choline + acetyl-CoA = acetylcholine + CoA. Functionally, catalyzes the reversible synthesis of acetylcholine (ACh) from acetyl CoA and choline at cholinergic synapses. This is Choline O-acetyltransferase (chat) from Danio rerio (Zebrafish).